Here is a 286-residue protein sequence, read N- to C-terminus: Shikimate dehydrogenase (NADP(+)) (286 aa).

Residues 22–24 (SLS) and T69 each bind shikimate. The active-site Proton acceptor is K73. E85 is an NADP(+) binding site. Shikimate-binding residues include N94 and D109. Residues 133–137 (GAGGA) and V231 contribute to the NADP(+) site. Y233 contributes to the shikimate binding site. G254 contributes to the NADP(+) binding site.

It belongs to the shikimate dehydrogenase family. Homodimer.

The enzyme catalyses shikimate + NADP(+) = 3-dehydroshikimate + NADPH + H(+). Its pathway is metabolic intermediate biosynthesis; chorismate biosynthesis; chorismate from D-erythrose 4-phosphate and phosphoenolpyruvate: step 4/7. Functionally, involved in the biosynthesis of the chorismate, which leads to the biosynthesis of aromatic amino acids. Catalyzes the reversible NADPH linked reduction of 3-dehydroshikimate (DHSA) to yield shikimate (SA). The chain is Shikimate dehydrogenase (NADP(+)) from Alkaliphilus metalliredigens (strain QYMF).